A 342-amino-acid chain; its full sequence is Heparan sulfate glucosamine 3-O-sulfotransferase 6 (342 aa).

The disordered stretch occupies residues 1–21 (MAGSGGLGGGAGGGQGAGAGQ). The Cytoplasmic segment spans residues 1–31 (MAGSGGLGGGAGGGQGAGAGQGAALRASRAP). Residues 32 to 49 (MLLVALVLGAYCLCALPG) traverse the membrane as a helical; Signal-anchor for type II membrane protein segment. Over 50–342 (RCPPAARAPA…QMTGQDFGWG (293 aa)) the chain is Lumenal. The tract at residues 55 to 85 (ARAPAPAPAPSEPSSSVHRPGAPGLPLASGP) is disordered. The span at 66–85 (EPSSSVHRPGAPGLPLASGP) shows a compositional bias: low complexity. Residue 100–104 (KGGTR) participates in 3'-phosphoadenylyl sulfate binding. Substrate is bound by residues 122–128 (EPHFFDR) and 153–156 (KTPS). The 3'-phosphoadenylyl sulfate site is built by Arg-181 and Ser-189. 220-221 (WS) lines the substrate pocket. N-linked (GlcNAc...) asparagine glycosylation occurs at Asn-281. An intrachain disulfide couples Cys-288 to Cys-300. 305-309 (KGRPH) lines the 3'-phosphoadenylyl sulfate pocket.

It belongs to the sulfotransferase 1 family.

It is found in the golgi apparatus membrane. The catalysed reaction is alpha-D-glucosaminyl-[heparan sulfate](n) + 3'-phosphoadenylyl sulfate = 3-sulfo-alpha-D-glucosaminyl-[heparan sulfate](n) + adenosine 3',5'-bisphosphate + H(+). Functionally, sulfotransferase that utilizes 3'-phospho-5'-adenylyl sulfate (PAPS) to catalyze the transfer of a sulfo group to heparan sulfate. The substrate-specific O-sulfation generates an enzyme-modified heparan sulfate which acts as a binding receptor to Herpes Simplex Virus-1 (HSV-1) and permits its entry. Unlike 3-OST-1, does not convert non-anticoagulant heparan sulfate to anticoagulant heparan sulfate. In Homo sapiens (Human), this protein is Heparan sulfate glucosamine 3-O-sulfotransferase 6 (HS3ST6).